A 263-amino-acid polypeptide reads, in one-letter code: Palmitoyltransferase ZDHHC22 (263 aa).

Residues 1 to 9 (MLALRLLNV) lie on the Cytoplasmic side of the membrane. A helical membrane pass occupies residues 10 to 30 (VAPAYFLCISLVTFVLQLFLF). The Lumenal segment spans residues 31–48 (LPSMREDPAAARLFSPAL). The chain crosses the membrane as a helical span at residues 49 to 69 (LHGALFLFLSANALGNYVLVI). The Cytoplasmic segment spans residues 70–125 (QNSPDDLGACQGASARKTPCPSPSTHFCRVCARVTLRHDHHCFFTGNCIGSRNMRN). Residues 92–131 (PSTHFCRVCARVTLRHDHHCFFTGNCIGSRNMRNFVLFCL) enclose the DHHC domain. Cys-111 functions as the S-palmitoyl cysteine intermediate in the catalytic mechanism. Helical transmembrane passes span 126 to 146 (FVLF…AGVA) and 147 to 167 (YISA…TLLP). Residues 168-182 (TSISQFFSGAVLGSE) are Cytoplasmic-facing. Residues 183 to 203 (MFVILMLYLWFAIGLACAGFC) traverse the membrane as a helical segment. Residues 204–263 (CHQLLLILRGQTRHQVRKGVAVRARPWRKNLQEVFGKRWLLGLLVPMFNVGSESSKQQDK) are Lumenal-facing.

The protein belongs to the DHHC palmitoyltransferase family. As to quaternary structure, interacts with CNN3. As to expression, widely expressed.

The protein localises to the endoplasmic reticulum membrane. Its subcellular location is the golgi apparatus membrane. It catalyses the reaction L-cysteinyl-[protein] + hexadecanoyl-CoA = S-hexadecanoyl-L-cysteinyl-[protein] + CoA. Functionally, palmitoyltransferase that could catalyze the addition of palmitate onto various protein substrates and be involved in a variety of cellular processes. Catalyzes the palmitoylation of KCNMA1, regulating localization of KCNMA1 to the plasma membrane. Might also mediate palmitoylation of CNN3. This chain is Palmitoyltransferase ZDHHC22, found in Homo sapiens (Human).